Reading from the N-terminus, the 192-residue chain is Fe/S biogenesis protein NfuA (192 aa).

[4Fe-4S] cluster is bound by residues C149 and C152.

This sequence belongs to the NfuA family. In terms of assembly, homodimer. It depends on [4Fe-4S] cluster as a cofactor.

Involved in iron-sulfur cluster biogenesis. Binds a 4Fe-4S cluster, can transfer this cluster to apoproteins, and thereby intervenes in the maturation of Fe/S proteins. Could also act as a scaffold/chaperone for damaged Fe/S proteins. The polypeptide is Fe/S biogenesis protein NfuA (Idiomarina loihiensis (strain ATCC BAA-735 / DSM 15497 / L2-TR)).